Here is a 231-residue protein sequence, read N- to C-terminus: Large ribosomal subunit protein uL1 (231 aa).

It belongs to the universal ribosomal protein uL1 family. As to quaternary structure, part of the 50S ribosomal subunit.

Functionally, binds directly to 23S rRNA. The L1 stalk is quite mobile in the ribosome, and is involved in E site tRNA release. In terms of biological role, protein L1 is also a translational repressor protein, it controls the translation of the L11 operon by binding to its mRNA. This Teredinibacter turnerae (strain ATCC 39867 / T7901) protein is Large ribosomal subunit protein uL1.